A 273-amino-acid chain; its full sequence is MPELPEVETLKNSLKDKLIGLIIENVELKRDNLRYKLSPLLTTEILNTNILDVRRRAKYLIIDFNNDYSLIVHLGMSGRFTLQSANYKTQKHDHVIFDLSNGEKLIFNDTRRFGMIYSFKTDLLEKEFFNDLGIEPFSDLLTLEYLKDKLQTKKIPIKNLIMDNRVIVGIGNIYASESLHLARIHPDKSGNDLRDDEIENLIKAIRDVLTKAITAGGTTLKDFVNGDNKPGYFTKQLKVYGREGQSCLSCSSTIIKIKHSGRSTFYCKTCQYS.

Proline 2 (schiff-base intermediate with DNA) is an active-site residue. Catalysis depends on glutamate 3, which acts as the Proton donor. Lysine 58 serves as the catalytic Proton donor; for beta-elimination activity. Positions 92, 111, and 153 each coordinate DNA. The segment at 238 to 272 adopts an FPG-type zinc-finger fold; it reads KVYGREGQSCLSCSSTIIKIKHSGRSTFYCKTCQY. Residue arginine 262 is the Proton donor; for delta-elimination activity of the active site.

It belongs to the FPG family. As to quaternary structure, monomer. Requires Zn(2+) as cofactor.

It catalyses the reaction Hydrolysis of DNA containing ring-opened 7-methylguanine residues, releasing 2,6-diamino-4-hydroxy-5-(N-methyl)formamidopyrimidine.. It carries out the reaction 2'-deoxyribonucleotide-(2'-deoxyribose 5'-phosphate)-2'-deoxyribonucleotide-DNA = a 3'-end 2'-deoxyribonucleotide-(2,3-dehydro-2,3-deoxyribose 5'-phosphate)-DNA + a 5'-end 5'-phospho-2'-deoxyribonucleoside-DNA + H(+). Involved in base excision repair of DNA damaged by oxidation or by mutagenic agents. Acts as a DNA glycosylase that recognizes and removes damaged bases. Has a preference for oxidized purines, such as 7,8-dihydro-8-oxoguanine (8-oxoG). Has AP (apurinic/apyrimidinic) lyase activity and introduces nicks in the DNA strand. Cleaves the DNA backbone by beta-delta elimination to generate a single-strand break at the site of the removed base with both 3'- and 5'-phosphates. The protein is Formamidopyrimidine-DNA glycosylase of Rickettsia africae (strain ESF-5).